A 259-amino-acid chain; its full sequence is Deoxyribose-phosphate aldolase (259 aa).

The active-site Proton donor/acceptor is the Asp-102. The active-site Schiff-base intermediate with acetaldehyde is Lys-167. The active-site Proton donor/acceptor is the Lys-201.

The protein belongs to the DeoC/FbaB aldolase family. DeoC type 2 subfamily.

The protein localises to the cytoplasm. The enzyme catalyses 2-deoxy-D-ribose 5-phosphate = D-glyceraldehyde 3-phosphate + acetaldehyde. The protein operates within carbohydrate degradation; 2-deoxy-D-ribose 1-phosphate degradation; D-glyceraldehyde 3-phosphate and acetaldehyde from 2-deoxy-alpha-D-ribose 1-phosphate: step 2/2. In terms of biological role, catalyzes a reversible aldol reaction between acetaldehyde and D-glyceraldehyde 3-phosphate to generate 2-deoxy-D-ribose 5-phosphate. This chain is Deoxyribose-phosphate aldolase, found in Edwardsiella ictaluri (strain 93-146).